A 319-amino-acid chain; its full sequence is Probable arabinan endo-1,5-alpha-L-arabinosidase C (319 aa).

An N-terminal signal peptide occupies residues M1–A16. Residue D31 is the Proton acceptor of the active site. N190 is a glycosylation site (N-linked (GlcNAc...) asparagine). E198 acts as the Proton donor in catalysis. An N-linked (GlcNAc...) asparagine glycan is attached at N222.

Belongs to the glycosyl hydrolase 43 family.

Its subcellular location is the secreted. The enzyme catalyses Endohydrolysis of (1-&gt;5)-alpha-arabinofuranosidic linkages in (1-&gt;5)-arabinans.. Its pathway is glycan metabolism; L-arabinan degradation. Functionally, endo-1,5-alpha-L-arabinanase involved in degradation of pectin. Its preferred substrate is linear 1,5-alpha-L-arabinan. This is Probable arabinan endo-1,5-alpha-L-arabinosidase C (abnC) from Aspergillus clavatus (strain ATCC 1007 / CBS 513.65 / DSM 816 / NCTC 3887 / NRRL 1 / QM 1276 / 107).